Reading from the N-terminus, the 149-residue chain is Transcriptional repressor NrdR (149 aa).

The segment at cysteine 3–cysteine 34 is a zinc-finger region. Positions proline 49–glutamine 139 constitute an ATP-cone domain.

This sequence belongs to the NrdR family. Zn(2+) serves as cofactor.

Negatively regulates transcription of bacterial ribonucleotide reductase nrd genes and operons by binding to NrdR-boxes. In Pasteurella multocida (strain Pm70), this protein is Transcriptional repressor NrdR.